The chain runs to 231 residues: Somatolactin-2 (231 aa).

An N-terminal signal peptide occupies residues 1 to 24 (MRMMRAIKQGQWAILLWPYLLTTS). 3 disulfide bridges follow: Cys-29–Cys-39, Cys-89–Cys-205, and Cys-222–Cys-230. Asn-145 carries an N-linked (GlcNAc...) asparagine glycan.

The protein belongs to the somatotropin/prolactin family. In terms of tissue distribution, pituitary gland.

Its subcellular location is the secreted. The protein is Somatolactin-2 of Sparus aurata (Gilthead sea bream).